A 344-amino-acid polypeptide reads, in one-letter code: L-erythro-3,5-diaminohexanoate dehydrogenase (344 aa).

The protein belongs to the KDD family. As to quaternary structure, homodimer.

The enzyme catalyses (3S,5S)-3,5-diaminohexanoate + NAD(+) + H2O = (5S)-5-amino-3-oxohexanoate + NH4(+) + NADH + H(+). Its pathway is amino-acid degradation; L-lysine degradation via acetate pathway. Involved in the anaerobic fermentation of lysine. Catalyzes the oxidative deamination of L-erythro-3,5-diaminohexanoate (3,5-DAH) to 3-keto-5-aminohexanoate (KAH). The protein is L-erythro-3,5-diaminohexanoate dehydrogenase of Acetoanaerobium sticklandii (strain ATCC 12662 / DSM 519 / JCM 1433 / CCUG 9281 / NCIMB 10654 / HF) (Clostridium sticklandii).